A 211-amino-acid chain; its full sequence is ATP phosphoribosyltransferase (211 aa).

This sequence belongs to the ATP phosphoribosyltransferase family. Short subfamily. Heteromultimer composed of HisG and HisZ subunits.

Its subcellular location is the cytoplasm. The enzyme catalyses 1-(5-phospho-beta-D-ribosyl)-ATP + diphosphate = 5-phospho-alpha-D-ribose 1-diphosphate + ATP. It participates in amino-acid biosynthesis; L-histidine biosynthesis; L-histidine from 5-phospho-alpha-D-ribose 1-diphosphate: step 1/9. Its function is as follows. Catalyzes the condensation of ATP and 5-phosphoribose 1-diphosphate to form N'-(5'-phosphoribosyl)-ATP (PR-ATP). Has a crucial role in the pathway because the rate of histidine biosynthesis seems to be controlled primarily by regulation of HisG enzymatic activity. This chain is ATP phosphoribosyltransferase, found in Pseudomonas putida (strain ATCC 700007 / DSM 6899 / JCM 31910 / BCRC 17059 / LMG 24140 / F1).